Consider the following 929-residue polypeptide: Protocadherin gamma-B7 (929 aa).

The N-terminal stretch at 1 to 30 is a signal peptide; sequence MGGSCAQRRRAGPRQVLFPLLLPLFYPTLC. 6 consecutive Cadherin domains span residues 31 to 133, 134 to 242, 243 to 347, 348 to 452, 453 to 562, and 570 to 675; these read EPIR…APQF, RKDE…PPVF, SQDV…SPEI, IITS…APVF, GQSA…APRV, and DGSA…LPDF. Residues 31 to 691 are Extracellular-facing; sequence EPIRYSIPEE…SDSQAEMQFY (661 aa). Asn-419 and Asn-545 each carry an N-linked (GlcNAc...) asparagine glycan. A helical membrane pass occupies residues 692–712; that stretch reads LVVALALISVLFLLAVILAIA. Residues 713–929 are Cytoplasmic-facing; that stretch reads LRLRQSFSPT…KKKSGKKEKK (217 aa). 2 disordered regions span residues 806-838 and 899-929; these read QAPPNTDWRFSQAQRPGTSGSQNGDDTGTWPNN and ATLTNAAGKRDGKAPAGGNGNKKKSGKKEKK. Positions 807-838 are enriched in polar residues; that stretch reads APPNTDWRFSQAQRPGTSGSQNGDDTGTWPNN. Positions 919–929 are enriched in basic residues; it reads NKKKSGKKEKK.

The protein localises to the cell membrane. Potential calcium-dependent cell-adhesion protein. May be involved in the establishment and maintenance of specific neuronal connections in the brain. This Homo sapiens (Human) protein is Protocadherin gamma-B7 (PCDHGB7).